A 1152-amino-acid polypeptide reads, in one-letter code: DNA-directed RNA polymerase subunit beta (1152 aa).

This sequence belongs to the RNA polymerase beta chain family. As to quaternary structure, the RNAP catalytic core consists of 2 alpha, 1 beta, 1 beta' and 1 omega subunit. When a sigma factor is associated with the core the holoenzyme is formed, which can initiate transcription.

It carries out the reaction RNA(n) + a ribonucleoside 5'-triphosphate = RNA(n+1) + diphosphate. In terms of biological role, DNA-dependent RNA polymerase catalyzes the transcription of DNA into RNA using the four ribonucleoside triphosphates as substrates. This Deinococcus geothermalis (strain DSM 11300 / CIP 105573 / AG-3a) protein is DNA-directed RNA polymerase subunit beta.